The primary structure comprises 419 residues: L-rhamnose isomerase (419 aa).

Mn(2+)-binding residues include His-262, Asp-294, and Asp-296.

This sequence belongs to the rhamnose isomerase family. Homotetramer. The cofactor is Mn(2+).

Its subcellular location is the cytoplasm. It catalyses the reaction L-rhamnopyranose = L-rhamnulose. Its pathway is carbohydrate degradation; L-rhamnose degradation; glycerone phosphate from L-rhamnose: step 1/3. Functionally, catalyzes the interconversion of L-rhamnose and L-rhamnulose. The polypeptide is L-rhamnose isomerase (Salmonella newport (strain SL254)).